The following is a 148-amino-acid chain: Large ribosomal subunit protein bL9 (148 aa).

This sequence belongs to the bacterial ribosomal protein bL9 family.

In terms of biological role, binds to the 23S rRNA. The chain is Large ribosomal subunit protein bL9 from Listeria monocytogenes serotype 4b (strain CLIP80459).